Consider the following 27-residue polypeptide: Phospholipase A2 1 (27 aa).

This sequence belongs to the phospholipase A2 family. Group I subfamily. It depends on Ca(2+) as a cofactor. Expressed by the venom gland.

It is found in the secreted. It catalyses the reaction a 1,2-diacyl-sn-glycero-3-phosphocholine + H2O = a 1-acyl-sn-glycero-3-phosphocholine + a fatty acid + H(+). Its function is as follows. Snake venom phospholipase A2 (PLA2) that inhibits neuromuscular transmission by blocking acetylcholine release from the nerve termini. PLA2 catalyzes the calcium-dependent hydrolysis of the 2-acyl groups in 3-sn-phosphoglycerides. In Micrurus nigrocinctus (Central American coral snake), this protein is Phospholipase A2 1.